Reading from the N-terminus, the 230-residue chain is Flagellar L-ring protein (230 aa).

An N-terminal signal peptide occupies residues methionine 1–threonine 15. Cysteine 16 is lipidated: N-palmitoyl cysteine. Cysteine 16 carries S-diacylglycerol cysteine lipidation.

Belongs to the FlgH family. The basal body constitutes a major portion of the flagellar organelle and consists of four rings (L,P,S, and M) mounted on a central rod.

The protein localises to the cell outer membrane. It localises to the bacterial flagellum basal body. Functionally, assembles around the rod to form the L-ring and probably protects the motor/basal body from shearing forces during rotation. The sequence is that of Flagellar L-ring protein from Xanthomonas oryzae pv. oryzae (strain MAFF 311018).